The following is a 431-amino-acid chain: 3-deoxy-D-manno-octulosonic acid transferase (431 aa).

A helical; Signal-anchor membrane pass occupies residues 5 to 27; the sequence is WLTSRLYDAFLVCAFFVSAPRIF. Glu67 (proton acceptor) is an active-site residue. CMP-binding positions include 275-276, 315-317, and 342-345; these read PR, MGV, and NLLE.

This sequence belongs to the glycosyltransferase group 1 family. Glycosyltransferase 30 subfamily.

The protein resides in the cell inner membrane. The enzyme catalyses lipid IVA (E. coli) + CMP-3-deoxy-beta-D-manno-octulosonate = alpha-Kdo-(2-&gt;6)-lipid IVA (E. coli) + CMP + H(+). It catalyses the reaction alpha-Kdo-(2-&gt;6)-lipid IVA (E. coli) + CMP-3-deoxy-beta-D-manno-octulosonate = alpha-Kdo-(2-&gt;4)-alpha-Kdo-(2-&gt;6)-lipid IVA (E. coli) + CMP + H(+). It carries out the reaction alpha-Kdo-(2-&gt;4)-alpha-Kdo-(2-&gt;6)-lipid IVA (E. coli) + CMP-3-deoxy-beta-D-manno-octulosonate = alpha-Kdo-(2-&gt;8)-alpha-Kdo-(2-&gt;4)-alpha-Kdo-(2-&gt;6)-lipid IVA (E. coli) + CMP + H(+). Its pathway is bacterial outer membrane biogenesis; LPS core biosynthesis. In terms of biological role, involved in lipopolysaccharide (LPS) biosynthesis. Catalyzes the transfer of three 3-deoxy-D-manno-octulosonate (Kdo) residues from CMP-Kdo to lipid IV(A), the tetraacyldisaccharide-1,4'-bisphosphate precursor of lipid A. Thus generates the genus-specific LPS epitope of Chlamydia, composed of the trisaccharide alpha-Kdo-(2-&gt;8)-alpha-Kdo-(2-&gt;4)-alpha-Kdo. The sequence is that of 3-deoxy-D-manno-octulosonic acid transferase (waaA) from Chlamydia trachomatis serovar D (strain ATCC VR-885 / DSM 19411 / UW-3/Cx).